The chain runs to 990 residues: Aconitate hydratase 3, mitochondrial (990 aa).

The N-terminal 78 residues, 1–78 (MYLTASSSAS…PFRFTSQIRA (78 aa)), are a transit peptide targeting the mitochondrion. Serine 91 is modified (phosphoserine). Substrate-binding positions include glutamine 182 and 301-303 (DSH). Residues cysteine 533, cysteine 599, and cysteine 602 each contribute to the [4Fe-4S] cluster site. Substrate contacts are provided by residues arginine 632, arginine 637, arginine 795, and 876-877 (SR).

This sequence belongs to the aconitase/IPM isomerase family. In terms of assembly, monomer. Interacts with B'GAMMA in the cytosol. [4Fe-4S] cluster serves as cofactor. Phosphorylated at Ser-91 in the cytoplasm; this phosphorylation requires the presence of B'GAMMA. Major aconitase isoenzyme in young seedlings. Expressed in roots, leaves, stems and flowers, and, at low levels, in seeds.

Its subcellular location is the mitochondrion. The protein resides in the cytoplasm. It catalyses the reaction citrate = D-threo-isocitrate. It participates in carbohydrate metabolism; tricarboxylic acid cycle; isocitrate from oxaloacetate: step 2/2. Catalyzes the isomerization of citrate to isocitrate via cis-aconitate. Contributes to oxidative stress tolerance. Modulates cytosolic citrate metabolism during lipid mobilization. Required during seedling growth. This chain is Aconitate hydratase 3, mitochondrial, found in Arabidopsis thaliana (Mouse-ear cress).